The primary structure comprises 179 residues: Large ribosomal subunit protein uL5 (179 aa).

Belongs to the universal ribosomal protein uL5 family. In terms of assembly, part of the 50S ribosomal subunit; part of the 5S rRNA/L5/L18/L25 subcomplex. Contacts the 5S rRNA and the P site tRNA. Forms a bridge to the 30S subunit in the 70S ribosome.

Functionally, this is one of the proteins that bind and probably mediate the attachment of the 5S RNA into the large ribosomal subunit, where it forms part of the central protuberance. In the 70S ribosome it contacts protein S13 of the 30S subunit (bridge B1b), connecting the 2 subunits; this bridge is implicated in subunit movement. Contacts the P site tRNA; the 5S rRNA and some of its associated proteins might help stabilize positioning of ribosome-bound tRNAs. The polypeptide is Large ribosomal subunit protein uL5 (Acidovorax ebreus (strain TPSY) (Diaphorobacter sp. (strain TPSY))).